The sequence spans 348 residues: Mamu class I histocompatibility antigen, alpha chain F (348 aa).

The signal sequence occupies residues 1–21; the sequence is MAPRTLLLVLSGALALTETWA. The alpha-1 stretch occupies residues 22–113; the sequence is GSHSLRYFST…LLLRYNQSEA (92 aa). Residues 22-307 are Extracellular-facing; that stretch reads GSHSLRYFST…ESSSQPTIPI (286 aa). Asn-109 is a glycosylation site (N-linked (GlcNAc...) asparagine). An alpha-2 region spans residues 114–205; the sequence is GSHTLQGMNG…ENGKETLQRA (92 aa). 2 disulfides stabilise this stretch: Cys-124/Cys-187 and Cys-226/Cys-282. Positions 206 to 297 are alpha-3; it reads DPPKAHVAHH…GLPQPLTLRW (92 aa). The region spanning 208–296 is the Ig-like C1-type domain; that stretch reads PKAHVAHHPI…EGLPQPLTLR (89 aa). Residues 298–307 are connecting peptide; that stretch reads ESSSQPTIPI. A helical membrane pass occupies residues 308–331; sequence VGIVAGLAVLAVVVTGAVVAAVMW. At 332–348 the chain is on the cytoplasmic side; it reads RRKSSDRNRGSYSQPTM.

It belongs to the MHC class I family. As to quaternary structure, heterodimer of an alpha chain and a beta chain (beta-2-microglobulin).

The protein resides in the membrane. Involved in the presentation of foreign antigens to the immune system. The chain is Mamu class I histocompatibility antigen, alpha chain F (Mamu-F) from Macaca mulatta (Rhesus macaque).